Consider the following 245-residue polypeptide: Phosducin (245 aa).

Positions 1-14 are enriched in acidic residues; that stretch reads MEEAKSQSLEEDFE. Residues 1-68 are disordered; sequence MEEAKSQSLE…RDNKDSKERF (68 aa). The Phosducin domain maps to 1–241; it reads MEEAKSQSLE…THALDQTNME (241 aa). Residues 59–68 are compositionally biased toward basic and acidic residues; it reads RDNKDSKERF. Ser73 carries the phosphoserine; by PKA modification. Residues 111-245 are thioredoxin fold; the sequence is YGFVYELETG…DQTNMEEDIE (135 aa).

Belongs to the phosducin family. Interacts with CRX. Forms a complex with the beta and gamma subunits of the GTP-binding protein, transducin. In terms of processing, light-induced changes in cyclic nucleotide levels modulate the phosphorylation of this protein by cAMP kinase.

The protein localises to the cytoplasm. The protein resides in the cytosol. It is found in the nucleus. Its subcellular location is the cell projection. It localises to the cilium. The protein localises to the photoreceptor outer segment. The protein resides in the photoreceptor inner segment. Functionally, inhibits the transcriptional activation activity of the cone-rod homeobox CRX. May participate in the regulation of visual phototransduction or in the integration of photoreceptor metabolism. The protein is Phosducin (PDC) of Felis catus (Cat).